The following is a 200-amino-acid chain: Signal peptidase complex catalytic subunit SEC11 (200 aa).

Topologically, residues 1-15 (MFAELAPYLSNPRQT) are cytoplasmic. Residues 16–33 (LAQLLNFALVLSTAFMGW) traverse the membrane as a helical; Signal-anchor for type II membrane protein segment. Residues 34–200 (KALSVYTNSS…MGVMVMLQRE (167 aa)) are Lumenal-facing. A glycan (N-linked (GlcNAc...) asparagine) is linked at N41. Residues S53 and H92 each act as charge relay system in the active site. The disordered stretch occupies residues 101–134 (GDGGKKSQRRLEREADKRSGPGLSSPVSHQMLTK). Residues 103–119 (GGKKSQRRLEREADKRS) are compositionally biased toward basic and acidic residues. Residue D142 is the Charge relay system of the active site. The segment at 186-197 (VLLGIMGVMVML) is C-terminal short (CTS) helix.

This sequence belongs to the peptidase S26B family. In terms of assembly, component of the signal peptidase complex (SPC) composed of a catalytic subunit SEC11 and three accessory subunits SPC1, SPC2 and SPC3. The complex induces a local thinning of the ER membrane which is used to measure the length of the signal peptide (SP) h-region of protein substrates. This ensures the selectivity of the complex towards h-regions shorter than 18-20 amino acids. SPC associates with the translocon complex.

The protein localises to the endoplasmic reticulum membrane. It catalyses the reaction Cleavage of hydrophobic, N-terminal signal or leader sequences from secreted and periplasmic proteins.. Its function is as follows. Catalytic component of the signal peptidase complex (SPC) which catalyzes the cleavage of N-terminal signal sequences from nascent proteins as they are translocated into the lumen of the endoplasmic reticulum. Specifically cleaves N-terminal signal peptides that contain a hydrophobic alpha-helix (h-region) shorter than 18-20 amino acids. This is Signal peptidase complex catalytic subunit SEC11 (SEC11) from Arthroderma benhamiae (strain ATCC MYA-4681 / CBS 112371) (Trichophyton mentagrophytes).